The primary structure comprises 498 residues: Guanosine-5'-triphosphate,3'-diphosphate pyrophosphatase (498 aa).

This sequence belongs to the GppA/Ppx family. GppA subfamily.

The catalysed reaction is guanosine 3'-diphosphate 5'-triphosphate + H2O = guanosine 3',5'-bis(diphosphate) + phosphate + H(+). It functions in the pathway purine metabolism; ppGpp biosynthesis; ppGpp from GTP: step 2/2. Functionally, catalyzes the conversion of pppGpp to ppGpp. Guanosine pentaphosphate (pppGpp) is a cytoplasmic signaling molecule which together with ppGpp controls the 'stringent response', an adaptive process that allows bacteria to respond to amino acid starvation, resulting in the coordinated regulation of numerous cellular activities. The chain is Guanosine-5'-triphosphate,3'-diphosphate pyrophosphatase from Pectobacterium carotovorum subsp. carotovorum (strain PC1).